We begin with the raw amino-acid sequence, 275 residues long: Serine/threonine-protein phosphatase PGAM5, mitochondrial (275 aa).

The helical transmembrane segment at 7–24 (LIAGGSAAAAILGVVAAG) threads the bilayer.

This sequence belongs to the phosphoglycerate mutase family. BPG-dependent PGAM subfamily. In terms of processing, phosphorylated by the RIPK1/RIPK3 complex under necrotic conditions. This phosphorylation increases PGAM5 phosphatase activity.

The protein resides in the mitochondrion outer membrane. The enzyme catalyses O-phospho-L-seryl-[protein] + H2O = L-seryl-[protein] + phosphate. The catalysed reaction is O-phospho-L-threonyl-[protein] + H2O = L-threonyl-[protein] + phosphate. Functionally, displays phosphatase activity for serine/threonine residues. Has apparently no phosphoglycerate mutase activity. May be regulator of mitochondrial dynamics. May be a central mediator for programmed necrosis. In Xenopus laevis (African clawed frog), this protein is Serine/threonine-protein phosphatase PGAM5, mitochondrial (pgam5).